The primary structure comprises 307 residues: Bifunctional protein FolD (307 aa).

NADP(+) contacts are provided by residues glycine 170–serine 172, serine 195, and isoleucine 236.

This sequence belongs to the tetrahydrofolate dehydrogenase/cyclohydrolase family. As to quaternary structure, homodimer.

It carries out the reaction (6R)-5,10-methylene-5,6,7,8-tetrahydrofolate + NADP(+) = (6R)-5,10-methenyltetrahydrofolate + NADPH. The catalysed reaction is (6R)-5,10-methenyltetrahydrofolate + H2O = (6R)-10-formyltetrahydrofolate + H(+). The protein operates within one-carbon metabolism; tetrahydrofolate interconversion. Its function is as follows. Catalyzes the oxidation of 5,10-methylenetetrahydrofolate to 5,10-methenyltetrahydrofolate and then the hydrolysis of 5,10-methenyltetrahydrofolate to 10-formyltetrahydrofolate. The sequence is that of Bifunctional protein FolD from Sinorhizobium fredii (strain NBRC 101917 / NGR234).